We begin with the raw amino-acid sequence, 436 residues long: UPF0597 protein DP0591 (436 aa).

This sequence belongs to the UPF0597 family.

This chain is UPF0597 protein DP0591, found in Desulfotalea psychrophila (strain LSv54 / DSM 12343).